Reading from the N-terminus, the 185-residue chain is Nuclear transcription factor Y subunit B-3 (185 aa).

Positions 1 to 36 (MADGPGSPGGGGGSHESGSPRGGGGGGGGGGGGGGV) are enriched in gly residues. The disordered stretch occupies residues 1–39 (MADGPGSPGGGGGSHESGSPRGGGGGGGGGGGGGGVREQ). A DNA-binding region spans residues 43–49 (LPIANIS). The tract at residues 70–81 (VQECVSEFISFI) is subunit association domain (SAD). Residues 145–164 (KDVLGSHGGSSSSAQGMGQQ) form a disordered region. The segment covering 153-164 (GSSSSAQGMGQQ) has biased composition (low complexity).

This sequence belongs to the NFYB/HAP3 subunit family. In terms of assembly, heterotrimeric transcription factor composed of three components, NF-YA, NF-YB and NF-YC. NF-YB and NF-YC must interact and dimerize for NF-YA association and DNA binding. Ubiquitous.

The protein resides in the nucleus. Functionally, component of the NF-Y/HAP transcription factor complex. The NF-Y complex stimulates the transcription of various genes by recognizing and binding to a CCAAT motif in promoters. May regulate the expression of photosynthetic genes, and may be involved in chloroplast and amyloplast development. In Oryza sativa subsp. japonica (Rice), this protein is Nuclear transcription factor Y subunit B-3 (NFYB3).